The following is a 245-amino-acid chain: Phosphoadenosine 5'-phosphosulfate reductase (245 aa).

Cys239 functions as the Nucleophile; cysteine thiosulfonate intermediate in the catalytic mechanism.

Belongs to the PAPS reductase family. CysH subfamily.

The protein localises to the cytoplasm. The catalysed reaction is [thioredoxin]-disulfide + sulfite + adenosine 3',5'-bisphosphate + 2 H(+) = [thioredoxin]-dithiol + 3'-phosphoadenylyl sulfate. Its pathway is sulfur metabolism; hydrogen sulfide biosynthesis; sulfite from sulfate: step 3/3. In terms of biological role, catalyzes the formation of sulfite from phosphoadenosine 5'-phosphosulfate (PAPS) using thioredoxin as an electron donor. This Shewanella oneidensis (strain ATCC 700550 / JCM 31522 / CIP 106686 / LMG 19005 / NCIMB 14063 / MR-1) protein is Phosphoadenosine 5'-phosphosulfate reductase.